A 428-amino-acid polypeptide reads, in one-letter code: Elongation factor 1-alpha (428 aa).

The region spanning 5 to 215 (KPHVNIVFIG…ALDQIPEPPK (211 aa)) is the tr-type G domain. A G1 region spans residues 14–21 (GHVDHGKS). Residue 14-21 (GHVDHGKS) participates in GTP binding. Serine 21 is a Mg(2+) binding site. Residues 68 to 72 (GITID) form a G2 region. The tract at residues 89–92 (DAPG) is G3. GTP is bound by residues 89-93 (DAPGH) and 144-147 (NKMD). The segment at 144-147 (NKMD) is G4. Residues 181–183 (SAW) are G5.

This sequence belongs to the TRAFAC class translation factor GTPase superfamily. Classic translation factor GTPase family. EF-Tu/EF-1A subfamily.

The protein resides in the cytoplasm. The enzyme catalyses GTP + H2O = GDP + phosphate + H(+). In terms of biological role, GTP hydrolase that promotes the GTP-dependent binding of aminoacyl-tRNA to the A-site of ribosomes during protein biosynthesis. The protein is Elongation factor 1-alpha of Thermococcus onnurineus (strain NA1).